A 351-amino-acid polypeptide reads, in one-letter code: uncharacterized protein (351 aa).

Mn(2+) is bound by residues aspartate 215, aspartate 226, histidine 290, glutamate 319, and glutamate 333.

It belongs to the peptidase M24B family. It depends on Mn(2+) as a cofactor.

This is an uncharacterized protein from Staphylococcus aureus (strain MRSA252).